A 312-amino-acid chain; its full sequence is tRNA dimethylallyltransferase (312 aa).

15 to 22 is a binding site for ATP; sequence GPTAAGKS. 17-22 contacts substrate; that stretch reads TAAGKS. Positions 40-43 are interaction with substrate tRNA; it reads DSMQ.

This sequence belongs to the IPP transferase family. Monomer. Mg(2+) is required as a cofactor.

The catalysed reaction is adenosine(37) in tRNA + dimethylallyl diphosphate = N(6)-dimethylallyladenosine(37) in tRNA + diphosphate. Its function is as follows. Catalyzes the transfer of a dimethylallyl group onto the adenine at position 37 in tRNAs that read codons beginning with uridine, leading to the formation of N6-(dimethylallyl)adenosine (i(6)A). This chain is tRNA dimethylallyltransferase, found in Streptomyces avermitilis (strain ATCC 31267 / DSM 46492 / JCM 5070 / NBRC 14893 / NCIMB 12804 / NRRL 8165 / MA-4680).